We begin with the raw amino-acid sequence, 223 residues long: AN1-type zinc finger protein 6 (223 aa).

The A20-type zinc finger occupies S8–N42. C14, C18, C30, and C33 together coordinate Zn(2+). Positions Q41 to E155 are disordered. S49 carries the phosphoserine modification. Polar residues-rich tracts occupy residues A77–V110 and S137–E148. Residues K158–A204 form an AN1-type zinc finger. Positions 164, 167, 178, 180, 185, 188, 194, and 196 each coordinate Zn(2+). K219 is subject to N6-acetyllysine.

In terms of assembly, interacts with PKN1. Interacts with TRAF2. Interacts with mono- and polyubiquitin. Interacts with PEX6. Interacts with PEX5 (Cys-linked ubiquitinated).

It localises to the cytoplasm. In terms of biological role, involved in regulation of TNF-alpha induced NF-kappa-B activation and apoptosis. Involved in modulation of 'Lys-48'-linked polyubiquitination status of TRAF2 and decreases association of TRAF2 with RIPK1. Required for PTS1 target sequence-dependent protein import into peroxisomes and PEX5 stability; may cooperate with PEX6. In vitro involved in PEX5 export from the cytosol to peroxisomes. The sequence is that of AN1-type zinc finger protein 6 (Zfand6) from Mus musculus (Mouse).